A 1178-amino-acid polypeptide reads, in one-letter code: MSPNSSKTRTDQISSMPGINEATKVESKNVVKDAVPIKSEVETNGTSIVREKQDPSYVGWKQVGGWEEKDELTSEDLLVDVNKDTFLGNLLPDKFYGDWYHEVAILIIAGLCSFVLGYFKFSLASVLIVMLTTGMLYRTSSKKYRESLRDLAQKEQTVEKITSDYESVEWLNTFLDKYWPIIEPSVSQQIVDGTNTALSENVAIPKFIKAIWLDQFTLGVKPPRIDAIKTFQNTKSDVVVMDVCLSFTPHDMSDLDAKQCRNYVNSNVVLKAKIFGMDIPVSVADIFFQVFVRFRFQLMTTLPLVETINIQLLEVPEVDFISRLLGNSVFNWEILAIPGLMRLIQKMAFKYLSPVLLPPFSLQLNIPQLLSKTGLPIGVLEIKVKNAHGLRKLVGMIKKTVDPYLTFELSGKIVGKTKVFKNSANPVWNESIYILLQSFTDPLTIAVYDKRETLSDKKMGTVIFNLNKLHANHYHKNEKVHFLRNSKPVGELTFDLRFFPTIEPKKLLNGDEEPLPDMNTGITKITIRELKGLDELSDKKFVFAELYVNAELVMTTKKEKRTAHLKWNSDYYSVVTDRRKTICRFVLKDQSGKVISSSVQPLNHLIDRTEVNKEWIPLRNGKGELKVTTYWRPVDIDLGLKSVGYTTPIGMLRVFINKAENLRNPDSLGKISPYAKVSVNGVARGRTNERIETLNPIWNQSIYVSVTSPLQKVSIDCFGIDTNGDDHNLGSLNIQTQNIYHKDNDDKYTIFIDNAPRTGNLIGKKGVKGTVTYYLSFYPVVPVLSLEEAKEVDEINEKKDKLEKQKSTLDDKNISKEEKERIKKEEFRLTEKYDMYSYKMKLDLDELLQYNAGVLGVTVLGGELPQPGLYVQTFFDSCGYAAITSAKNAIRTIKTGWSGDFMIKELEWSVTTFRVTKTKDANKAENFICEVNIPTIELVRNCYYKPSVLNLIGKKSAKLLVQVSWFPVTATELPQSDLITNSGDLKITAKSAENLIGVNKNGYSDPYVEFFLNEKSTSPFFKTAVQKKTLNPTWNESKTIEVSNRVNDYLTINVKDYESTNSNRSIGKAVVPLSTIDPESDTTFNIPLVGPKGEDGGVLHLEFEFEPRYTTNVVKREAGLGNFATKGLGTGIKAGSTVFALGTNVVSTGLGTIDKVKAGVFGGKKSTTTGDKKSEEKQ.

Residues M1–P17 are compositionally biased toward polar residues. A disordered region spans residues M1 to S27. The Cytoplasmic segment spans residues M1–D98. A helical transmembrane segment spans residues W99–F119. A topological domain (extracellular) is located at residue K120. The chain crosses the membrane as a helical span at residues F121–S141. Over K142–Q1178 the chain is Cytoplasmic. The region spanning D164 to P367 is the SMP-LTD domain. C2 domains lie at P358–H481, P504–T628, and R632–T749. The stretch at L784 to R821 forms a coiled coil. The 125-residue stretch at Q962–I1086 folds into the C2 4 domain. S991 carries the post-translational modification Phosphoserine.

Belongs to the tricalbin family. In terms of assembly, interacts with TCB1 and TCB3 via its C-terminal domain.

Its subcellular location is the cell membrane. The protein resides in the endoplasmic reticulum membrane. Its function is as follows. May play a role in membrane trafficking. The polypeptide is Tricalbin-2 (TCB2) (Saccharomyces cerevisiae (strain ATCC 204508 / S288c) (Baker's yeast)).